Consider the following 197-residue polypeptide: Protein RmlC homolog (197 aa).

Catalysis depends on histidine 76, which acts as the Proton acceptor. The Proton donor role is filled by tyrosine 140.

In terms of biological role, could catalyze a 3,5-epimerization. In Streptococcus pyogenes serotype M6 (strain ATCC BAA-946 / MGAS10394), this protein is Protein RmlC homolog (rfbC).